Here is a 101-residue protein sequence, read N- to C-terminus: Large ribosomal subunit protein uL24 (101 aa).

This sequence belongs to the universal ribosomal protein uL24 family. Part of the 50S ribosomal subunit.

Functionally, one of two assembly initiator proteins, it binds directly to the 5'-end of the 23S rRNA, where it nucleates assembly of the 50S subunit. Its function is as follows. One of the proteins that surrounds the polypeptide exit tunnel on the outside of the subunit. The polypeptide is Large ribosomal subunit protein uL24 (Streptococcus uberis (strain ATCC BAA-854 / 0140J)).